Consider the following 350-residue polypeptide: NADH-quinone oxidoreductase subunit H (350 aa).

8 consecutive transmembrane segments (helical) span residues 31–51 (LMLL…LFLI), 102–122 (LLAP…IPFG), 132–152 (LGVL…WMAG), 171–191 (MLSY…MAGS), 205–225 (WFIF…NAEF), 263–283 (FMIG…APFG), 286–306 (FIPS…LYMW), and 322–342 (FAWK…GFGL).

The protein belongs to the complex I subunit 1 family. NDH-1 is composed of 14 different subunits. Subunits NuoA, H, J, K, L, M, N constitute the membrane sector of the complex.

The protein resides in the cell membrane. The catalysed reaction is a quinone + NADH + 5 H(+)(in) = a quinol + NAD(+) + 4 H(+)(out). Functionally, NDH-1 shuttles electrons from NADH, via FMN and iron-sulfur (Fe-S) centers, to quinones in the respiratory chain. The immediate electron acceptor for the enzyme in this species is believed to be ubiquinone. Couples the redox reaction to proton translocation (for every two electrons transferred, four hydrogen ions are translocated across the cytoplasmic membrane), and thus conserves the redox energy in a proton gradient. This subunit may bind ubiquinone. This is NADH-quinone oxidoreductase subunit H from Carboxydothermus hydrogenoformans (strain ATCC BAA-161 / DSM 6008 / Z-2901).